The chain runs to 628 residues: Chaperone protein DnaK (628 aa).

Threonine 197 is subject to Phosphothreonine; by autocatalysis. The disordered stretch occupies residues 597–628 (EQMYKGEQGAQGGAADTSKKKSDDDVIDAEIE).

This sequence belongs to the heat shock protein 70 family.

Its function is as follows. Acts as a chaperone. The protein is Chaperone protein DnaK of Sulfurimonas denitrificans (strain ATCC 33889 / DSM 1251) (Thiomicrospira denitrificans (strain ATCC 33889 / DSM 1251)).